Here is a 132-residue protein sequence, read N- to C-terminus: Inactive D-aminoacyl-tRNA deacylase (132 aa).

It belongs to the DTD family.

In terms of biological role, a non-functional D-aminoacyl-tRNA deacylase. The chain is Inactive D-aminoacyl-tRNA deacylase from Bacillus subtilis (strain 168).